The sequence spans 345 residues: Histidinol-phosphate aminotransferase (345 aa).

The residue at position 205 (Lys-205) is an N6-(pyridoxal phosphate)lysine.

Belongs to the class-II pyridoxal-phosphate-dependent aminotransferase family. Histidinol-phosphate aminotransferase subfamily. As to quaternary structure, homodimer. Requires pyridoxal 5'-phosphate as cofactor.

The catalysed reaction is L-histidinol phosphate + 2-oxoglutarate = 3-(imidazol-4-yl)-2-oxopropyl phosphate + L-glutamate. Its pathway is amino-acid biosynthesis; L-histidine biosynthesis; L-histidine from 5-phospho-alpha-D-ribose 1-diphosphate: step 7/9. This is Histidinol-phosphate aminotransferase from Parabacteroides distasonis (strain ATCC 8503 / DSM 20701 / CIP 104284 / JCM 5825 / NCTC 11152).